Reading from the N-terminus, the 210-residue chain is Orotate phosphoribosyltransferase (210 aa).

5-phospho-alpha-D-ribose 1-diphosphate contacts are provided by residues R94, K98, H100, and E120 to S128. S124 is a binding site for orotate.

This sequence belongs to the purine/pyrimidine phosphoribosyltransferase family. PyrE subfamily. In terms of assembly, homodimer. Requires Mg(2+) as cofactor.

It catalyses the reaction orotidine 5'-phosphate + diphosphate = orotate + 5-phospho-alpha-D-ribose 1-diphosphate. The protein operates within pyrimidine metabolism; UMP biosynthesis via de novo pathway; UMP from orotate: step 1/2. Its function is as follows. Catalyzes the transfer of a ribosyl phosphate group from 5-phosphoribose 1-diphosphate to orotate, leading to the formation of orotidine monophosphate (OMP). In Bacillus anthracis (strain A0248), this protein is Orotate phosphoribosyltransferase.